The sequence spans 315 residues: ATP synthase gamma chain (315 aa).

It belongs to the ATPase gamma chain family. As to quaternary structure, F-type ATPases have 2 components, CF(1) - the catalytic core - and CF(0) - the membrane proton channel. CF(1) has five subunits: alpha(3), beta(3), gamma(1), delta(1), epsilon(1). CF(0) has three main subunits: a, b and c.

The protein resides in the cell membrane. In terms of biological role, produces ATP from ADP in the presence of a proton gradient across the membrane. The gamma chain is believed to be important in regulating ATPase activity and the flow of protons through the CF(0) complex. This Latilactobacillus sakei subsp. sakei (strain 23K) (Lactobacillus sakei subsp. sakei) protein is ATP synthase gamma chain.